The primary structure comprises 572 residues: Sulfite reductase [NADPH] hemoprotein beta-component (572 aa).

Cysteine 437, cysteine 443, cysteine 482, and cysteine 486 together coordinate [4Fe-4S] cluster. Siroheme is bound at residue cysteine 486.

The protein belongs to the nitrite and sulfite reductase 4Fe-4S domain family. Alpha(8)-beta(8). The alpha component is a flavoprotein, the beta component is a hemoprotein. Siroheme serves as cofactor. It depends on [4Fe-4S] cluster as a cofactor.

The catalysed reaction is hydrogen sulfide + 3 NADP(+) + 3 H2O = sulfite + 3 NADPH + 4 H(+). The protein operates within sulfur metabolism; hydrogen sulfide biosynthesis; hydrogen sulfide from sulfite (NADPH route): step 1/1. Its function is as follows. Component of the sulfite reductase complex that catalyzes the 6-electron reduction of sulfite to sulfide. This is one of several activities required for the biosynthesis of L-cysteine from sulfate. The protein is Sulfite reductase [NADPH] hemoprotein beta-component of Lysinibacillus sphaericus (strain C3-41).